The primary structure comprises 579 residues: Nuclear receptor coactivator 5 (579 aa).

M1 carries the N-acetylmethionine modification. Positions 1-78 (MNTAPSRPSP…LRDHRDSRSV (78 aa)) are disordered. The transcription repression stretch occupies residues 1-158 (MNTAPSRPSP…RDSFDGRGPP (158 aa)). T3 carries the phosphothreonine modification. Residues S9, S21, S24, S29, and S34 each carry the phosphoserine modification. Composition is skewed to basic and acidic residues over residues 11-62 (TRRD…DLRD) and 68-78 (DLRDHRDSRSV). Residues S96, S116, S126, S143, and S151 each carry the phosphoserine modification. Positions 148–173 (YRDSFDGRGPPGPESQSRAKERLKRE) are disordered. Residues 164 to 173 (SRAKERLKRE) show a composition bias toward basic and acidic residues. T274 bears the Phosphothreonine mark. The LXXLL motif motif lies at 345–349 (LINLL). 3 disordered regions span residues 375-428 (MRSS…PTSQ), 444-537 (VTAN…NFDN), and 560-579 (QTTAQMGQPQAPMGSYQRHY). A Phosphoserine modification is found at S378. Residue T379 is modified to Phosphothreonine. S381 carries the post-translational modification Phosphoserine. Over residues 395–413 (SGASLKTQPSSQPLQSGQV) the composition is skewed to polar residues. Low complexity predominate over residues 446–457 (ANSSSASPSVAA). Residues 458–579 (GNTPNQNFST…APMGSYQRHY (122 aa)) form a transcription activation region. Composition is skewed to polar residues over residues 459–485 (NTPNQNFSTAANSQPQQRSQASGNQPP) and 520–537 (SNMTSQRPVSSTGINFDN).

In terms of assembly, binds HTATIP2/TIP30. Interacts with YLPM1. Forms a complex with ILF2, ILF3, YLPM1, KHDRBS1, RBMX and PPP1CA. As to expression, widely expressed.

The protein resides in the nucleus. In terms of biological role, nuclear receptor coregulator that can have both coactivator and corepressor functions. Interacts with nuclear receptors for steroids (ESR1 and ESR2) independently of the steroid binding domain (AF-2) of the ESR receptors, and with the orphan nuclear receptor NR1D2. Involved in the coactivation of nuclear steroid receptors (ER) as well as the corepression of MYC in response to 17-beta-estradiol (E2). This is Nuclear receptor coactivator 5 (NCOA5) from Homo sapiens (Human).